Consider the following 268-residue polypeptide: GTP cyclohydrolase FolE2 (268 aa).

This sequence belongs to the GTP cyclohydrolase IV family.

It catalyses the reaction GTP + H2O = 7,8-dihydroneopterin 3'-triphosphate + formate + H(+). It functions in the pathway cofactor biosynthesis; 7,8-dihydroneopterin triphosphate biosynthesis; 7,8-dihydroneopterin triphosphate from GTP: step 1/1. Converts GTP to 7,8-dihydroneopterin triphosphate. This is GTP cyclohydrolase FolE2 from Janthinobacterium sp. (strain Marseille) (Minibacterium massiliensis).